We begin with the raw amino-acid sequence, 1524 residues long: DNA polymerase alpha catalytic subunit (1524 aa).

Disordered regions lie at residues M1–I53 and R68–P139. Basic and acidic residues predominate over residues S20–K30. Acidic residues predominate over residues E79–D96. C1333, C1336, C1375, C1378, C1414, C1419, C1440, and C1446 together coordinate Zn(2+). The CysA-type zinc-finger motif lies at C1333–C1378. Residues C1414–C1446 carry the CysB motif motif.

Belongs to the DNA polymerase type-B family.

It is found in the nucleus. It carries out the reaction DNA(n) + a 2'-deoxyribonucleoside 5'-triphosphate = DNA(n+1) + diphosphate. Functionally, polymerase alpha in a complex with DNA primase is a replicative polymerase. The chain is DNA polymerase alpha catalytic subunit (POLA) from Arabidopsis thaliana (Mouse-ear cress).